A 1888-amino-acid chain; its full sequence is Zinc finger protein 106 (1888 aa).

A C2H2-type 1; atypical zinc finger spans residues 5-29 (RKCILCHIVYGSKKEMDEHMRSMLH). The segment at 43–67 (HECRVCRVTEVGLSAYAKHISGQLH) adopts a C2H2-type 2; atypical zinc-finger fold. The segment at 68–187 (KDNVDAQERE…GPRGSSVWHK (120 aa)) is disordered. Positions 75–89 (EREDDGKEEEEEEYF) are enriched in acidic residues. 3 stretches are compositionally biased toward basic and acidic residues: residues 90 to 108 (DKELVQLIQERKEQSRQDE), 118 to 138 (SDDRQPQWRREDRIPYQDRES), and 150 to 160 (PQRDWKWEKDG). Lys-91 participates in a covalent cross-link: Glycyl lysine isopeptide (Lys-Gly) (interchain with G-Cter in SUMO2). Residue Lys-155 forms a Glycyl lysine isopeptide (Lys-Gly) (interchain with G-Cter in SUMO2) linkage. The segment covering 161–175 (FNSTRKNSFPHSLRN) has biased composition (polar residues). Residues Lys-265 and Lys-309 each participate in a glycyl lysine isopeptide (Lys-Gly) (interchain with G-Cter in SUMO2) cross-link. Disordered stretches follow at residues 287–326 (KKSNKPSKYSQERCKWQRQDRDKAAKYRSPPEGYASDTFP) and 338–362 (RESQTTKQTDTAASKINGKNGTKAR). Positions 296 to 311 (SQERCKWQRQDRDKAA) are enriched in basic and acidic residues. Residues 342–357 (TTKQTDTAASKINGKN) are compositionally biased toward polar residues. Glycyl lysine isopeptide (Lys-Gly) (interchain with G-Cter in SUMO2) cross-links involve residues Lys-375, Lys-384, Lys-390, Lys-435, Lys-469, and Lys-479. 2 disordered regions span residues 410–437 (KPVDKTSNPPVIKTQKAGPPGSPSHKAI) and 453–525 (TEQS…TSKS). Basic residues predominate over residues 481-491 (GPHKQNLKNRS). Over residues 507–525 (LLNTSTLEGSHGSSYTSKS) the composition is skewed to polar residues. Glycyl lysine isopeptide (Lys-Gly) (interchain with G-Cter in SUMO2) cross-links involve residues Lys-524, Lys-534, and Lys-544. A disordered region spans residues 537 to 617 (KTVSGTQKEP…SAMTSDAENH (81 aa)). Residues 551–572 (NNTSQKAQDTVLQCPKTLQNPL) show a composition bias toward polar residues. Residue Lys-577 forms a Glycyl lysine isopeptide (Lys-Gly) (interchain with G-Cter in SUMO2) linkage. A compositionally biased stretch (basic and acidic residues) spans 577–593 (KRMENDAKESSVEESAK). A compositionally biased stretch (polar residues) spans 597–613 (SIESQPHSAGNSAMTSD). Residue Lys-620 forms a Glycyl lysine isopeptide (Lys-Gly) (interchain with G-Cter in SUMO2) linkage. The disordered stretch occupies residues 635–661 (STHTVDKEQGSQIPGTPENLSTSPRNS). A compositionally biased stretch (polar residues) spans 644 to 661 (GSQIPGTPENLSTSPRNS). Phosphoserine occurs at positions 657 and 677. Residues Lys-687, Lys-700, Lys-721, Lys-738, Lys-758, Lys-792, and Lys-824 each participate in a glycyl lysine isopeptide (Lys-Gly) (interchain with G-Cter in SUMO2) cross-link. A disordered region spans residues 696-728 (NNLVKSDGPFETESFEDTSLDTELQKPDLNNQP). A phosphoserine mark is found at Ser-876, Ser-878, Ser-881, and Ser-909. The interval 894 to 920 (TGEGTGKENEAQQSPSPNTALSAAQSQ) is disordered. Over residues 904-920 (AQQSPSPNTALSAAQSQ) the composition is skewed to polar residues. Lys-921 is covalently cross-linked (Glycyl lysine isopeptide (Lys-Gly) (interchain with G-Cter in SUMO2)). Residue Ser-953 is modified to Phosphoserine. Positions 968-986 (ARDLHSQERSTPLSERHAQ) are enriched in basic and acidic residues. 3 disordered regions span residues 968–1064 (ARDL…ERSQ), 1281–1461 (EQGN…SKKD), and 1468–1487 (QNPIETSRSGCDEVSSTSEL). The segment covering 992–1008 (GNSLSSNASSGHAVSSL) has biased composition (low complexity). The span at 1013 to 1022 (TDSSCTSGAE) shows a compositional bias: polar residues. A Phosphothreonine modification is found at Thr-1036. 3 positions are modified to phosphoserine: Ser-1040, Ser-1041, and Ser-1046. The span at 1050-1060 (KNKRRKIKGKK) shows a compositional bias: basic residues. Residues 1281–1296 (EQGNSRSKGNSPSCQS) are compositionally biased toward polar residues. Ser-1291, Ser-1293, and Ser-1296 each carry phosphoserine. Lys-1310 participates in a covalent cross-link: Glycyl lysine isopeptide (Lys-Gly) (interchain with G-Cter in SUMO2). The segment covering 1312–1321 (SSGSEACSSS) has biased composition (low complexity). Ser-1313 bears the Phosphoserine mark. Residue Lys-1335 forms a Glycyl lysine isopeptide (Lys-Gly) (interchain with G-Cter in SUMO2) linkage. Positions 1338–1354 (QSPADQPEQQAESTLAS) are enriched in polar residues. At Ser-1339 the chain carries Phosphoserine. The span at 1360–1373 (SKKKKKLRKKKTLR) shows a compositional bias: basic residues. Ser-1381 carries the post-translational modification Phosphoserine. Thr-1383 is modified (phosphothreonine). Glycyl lysine isopeptide (Lys-Gly) (interchain with G-Cter in SUMO2) cross-links involve residues Lys-1391, Lys-1403, Lys-1406, and Lys-1460. Over residues 1450 to 1461 (GDEKPDSPSKKD) the composition is skewed to basic and acidic residues. Residues 1470–1487 (PIETSRSGCDEVSSTSEL) show a composition bias toward polar residues. Ser-1474 bears the Phosphoserine mark. Glycyl lysine isopeptide (Lys-Gly) (interchain with G-Cter in SUMO2) cross-links involve residues Lys-1492 and Lys-1509. Residues 1509–1531 (KASKHSSEISSEPGDDEEPTEGS) are disordered. WD repeat units lie at residues 1534-1573 (GHQAAVNAIQIFGNFLYTCSADTTVRVYNLVSRKCVGVFE), 1575-1618 (HTSK…EQLQ), 1659-1700 (HGPR…LLRT), 1703-1742 (GHSKTVLCMKVVNDLVFSGSSDQSVHAHNIHTGELVRIYK), 1743-1780 (GHNHAVTVVNILGKVMVTACLDKFVRVYELQSHDRLQV), and 1783-1820 (GHKDMIMCMTIHKSVIYTGCYDGSIQAVRLNLMQNYRC). Lys-1590 participates in a covalent cross-link: Glycyl lysine isopeptide (Lys-Gly) (interchain with G-Cter in SUMO2). A Glycyl lysine isopeptide (Lys-Gly) (interchain with G-Cter in SUMO2) cross-link involves residue Lys-1742. A C2H2-type 3; atypical zinc finger spans residues 1818-1843 (YRCWWYGCTLIFGVVDHLKQHLLTDH). Lys-1869 participates in a covalent cross-link: Glycyl lysine isopeptide (Lys-Gly) (interchain with G-Cter in SUMO2).

Interacts with KNOP1. Interacts with TARDBP and NUP107. Interacts (via N-terminus) with RBM39. Interacts with the SH3 domains of FYN and GRB2. Post-translationally, phosphorylated by FYN in vitro. In terms of tissue distribution, widely expressed, with strongest expression in skeletal muscle, heart and brain (at protein level). Detected in spinal cord motor neurons.

Its subcellular location is the nucleus. It localises to the nucleolus. The protein localises to the nucleus speckle. RNA-binding protein. Specifically binds to 5'-GGGGCC-3' sequence repeats in RNA. Essential for maintenance of peripheral motor neuron and skeletal muscle function. Required for normal expression and/or alternative splicing of a number of genes in spinal cord and skeletal muscle, including the neurite outgrowth inhibitor RTN4. Also contributes to normal mitochondrial respiratory function in motor neurons, via an unknown mechanism. The sequence is that of Zinc finger protein 106 (Znf106) from Mus musculus (Mouse).